Here is a 254-residue protein sequence, read N- to C-terminus: MTKESSVKIGLIGAAGRMGKAIQEAASQQDIQLSGGIGRKGAEFGSYNDSESLAKASDVLIDFSTAAALKDNIEAALHHKKPIIIGTTGLTEADHQLIEQAASKIPVILAANTSLGVNMLAALVKQAAAKLGSDWDIEIVEMHHRHKKDAPSGTALLLGRAAAEGRGEKLEDIADLQRCPATEPRETGRIGFASLRGGSVAGDHMVVFASEGERIELGHRAESRIIFARGALKAALWLADQSAGFYQMKDVLGL.

13–18 (GAAGRM) lines the NAD(+) pocket. An NADP(+)-binding site is contributed by Arg-39. NAD(+) is bound by residues 86–88 (GTT) and 110–113 (AANT). The active-site Proton donor/acceptor is the His-143. His-144 serves as a coordination point for (S)-2,3,4,5-tetrahydrodipicolinate. Lys-147 serves as the catalytic Proton donor. 153 to 154 (GT) contributes to the (S)-2,3,4,5-tetrahydrodipicolinate binding site.

Belongs to the DapB family.

The protein localises to the cytoplasm. The enzyme catalyses (S)-2,3,4,5-tetrahydrodipicolinate + NAD(+) + H2O = (2S,4S)-4-hydroxy-2,3,4,5-tetrahydrodipicolinate + NADH + H(+). The catalysed reaction is (S)-2,3,4,5-tetrahydrodipicolinate + NADP(+) + H2O = (2S,4S)-4-hydroxy-2,3,4,5-tetrahydrodipicolinate + NADPH + H(+). Its pathway is amino-acid biosynthesis; L-lysine biosynthesis via DAP pathway; (S)-tetrahydrodipicolinate from L-aspartate: step 4/4. Functionally, catalyzes the conversion of 4-hydroxy-tetrahydrodipicolinate (HTPA) to tetrahydrodipicolinate. This chain is 4-hydroxy-tetrahydrodipicolinate reductase, found in Zymomonas mobilis subsp. mobilis (strain ATCC 31821 / ZM4 / CP4).